The primary structure comprises 342 residues: MVSVTRTVFGELPSGGGTVEKFQLRSDQLSVDIISWGCTITALQVKDRQGKASDVVLGFAELEGYLQKQPYFGAVVGRVANRIAKGRFTIGGKEYHLPVNREPNSLHGGFTGFDKVLWTPQVLTNGVQFFRVSPDGEEGYPGELKVWVTYTLDGGELVINYRAQASQTTPVNLTNHSYFNLAGQGSPNIYDHEVTIAADAYLPVDETLIPTGVIAPVEGTAFDLRKPVELGTHLQDYHIHGFDHNFCLKESKEKKFCARVRHAASGRILEVYTTQPGVQFYTGNFLDGTLKGKNGAVYPKHSGLCLETQNWPDSVNQPQFPPALLRPGEEYNHTTWFKFSVA.

The residue at position 14 (Ser-14) is a Phosphoserine. Beta-D-galactose contacts are provided by residues 81–82 (NR), His-107, 176–178 (HSY), Asp-243, Gln-279, and Glu-307. Catalysis depends on His-176, which acts as the Proton donor. The active-site Proton acceptor is the Glu-307.

The protein belongs to the aldose epimerase family. In terms of assembly, monomer.

It localises to the cytoplasm. It carries out the reaction alpha-D-galactose = beta-D-galactose. The enzyme catalyses alpha-D-glucose = beta-D-glucose. The protein operates within carbohydrate metabolism; hexose metabolism. It participates in carbohydrate metabolism; galactose metabolism. Mutarotase that catalyzes the interconversion of beta-D-galactose and alpha-D-galactose during galactose metabolism. Beta-D-galactose is metabolized in the liver into glucose 1-phosphate, the primary metabolic fuel, by the action of four enzymes that constitute the Leloir pathway: GALM, GALK1 (galactokinase), GALT (galactose-1-phosphate uridylyltransferase) and GALE (UDP-galactose-4'-epimerase). Involved in the maintenance of the equilibrium between the beta- and alpha-anomers of galactose, therefore ensuring a sufficient supply of the alpha-anomer for GALK1. Also active on D-glucose although shows a preference for galactose over glucose. This is Galactose mutarotase from Mus musculus (Mouse).